Here is a 253-residue protein sequence, read N- to C-terminus: Ubiquinone biosynthesis O-methyltransferase (253 aa).

The S-adenosyl-L-methionine site is built by R47, G78, D99, and M141.

It belongs to the methyltransferase superfamily. UbiG/COQ3 family.

It carries out the reaction a 3-demethylubiquinol + S-adenosyl-L-methionine = a ubiquinol + S-adenosyl-L-homocysteine + H(+). It catalyses the reaction a 3-(all-trans-polyprenyl)benzene-1,2-diol + S-adenosyl-L-methionine = a 2-methoxy-6-(all-trans-polyprenyl)phenol + S-adenosyl-L-homocysteine + H(+). It functions in the pathway cofactor biosynthesis; ubiquinone biosynthesis. In terms of biological role, O-methyltransferase that catalyzes the 2 O-methylation steps in the ubiquinone biosynthetic pathway. In Rhodopseudomonas palustris (strain HaA2), this protein is Ubiquinone biosynthesis O-methyltransferase.